Here is a 247-residue protein sequence, read N- to C-terminus: Protein ABHD14A (247 aa).

The chain crosses the membrane as a helical; Signal-anchor for type II membrane protein span at residues 11-31 (AALLGLGLLLVFLLYMGLPGP). Asn-43 carries an N-linked (GlcNAc...) asparagine glycan. Residues Ser-147, Asp-198, and His-225 each act as charge relay system in the active site.

This sequence belongs to the AB hydrolase superfamily. ABHD14 family. In terms of tissue distribution, widely expressed. Higher expression is detected in brain, kidney, heart, testis, ovary and uterus.

It is found in the cytoplasm. The protein localises to the membrane. Functionally, possible role in granule neuron development. The polypeptide is Protein ABHD14A (Mus musculus (Mouse)).